A 734-amino-acid chain; its full sequence is Ribosomal biogenesis protein LAS1L (734 aa).

The disordered stretch occupies residues 204–255 (EGIEEEDQEEDKNIVVDDITEQKPEPQDDGKSTESDVKADGDSKGSEEVDSH). Positions 214–255 (DKNIVVDDITEQKPEPQDDGKSTESDVKADGDSKGSEEVDSH) are enriched in basic and acidic residues. Glycyl lysine isopeptide (Lys-Gly) (interchain with G-Cter in SUMO2) cross-links involve residues Lys-215 and Lys-226. Residues Ser-441, Ser-523, and Ser-560 each carry the phosphoserine modification. Over residues 547 to 561 (GSEAKAQQQEEQGSV) the composition is skewed to polar residues. The segment at 547–619 (GSEAKAQQQE…PFSTGQESPT (73 aa)) is disordered. Residues 563–575 (DVKEEEKEEKEVL) are compositionally biased toward basic and acidic residues. A compositionally biased stretch (acidic residues) spans 578 to 605 (QVEEEEENDDQEEEEEDEDDEDDEEEDR). At Ser-617 the chain carries Phosphoserine. Residues 636–655 (SAWQVSSEDVRWDTFPLGRM) are interaction with NOL9.

The protein belongs to the LAS1 family. As to quaternary structure, component of some MLL1/MLL complex, at least composed of the core components KMT2A/MLL1, ASH2L, HCFC1/HCF1, WDR5 and RBBP5, as well as the facultative components BACC1, CHD8, E2F6, HSP70, INO80C, KANSL1, LAS1L, MAX, MCRS1, MGA, KAT8/MOF, PELP1, PHF20, PRP31, RING2, RUVB1/TIP49A, RUVB2/TIP49B, SENP3, TAF1, TAF4, TAF6, TAF7, TAF9 and TEX10. Component of the 5FMC complex, at least composed of PELP1, LAS1L, TEX10, WDR18 and SENP3; the complex interacts with methylated CHTOP and ZNF148. Interacts with NOL9 to form an ITS2 pre-rRNA endonuclease-kinase complex.

It is found in the nucleus. Its subcellular location is the nucleolus. It localises to the nucleoplasm. The protein resides in the cytoplasm. Its function is as follows. Required for the synthesis of the 60S ribosomal subunit and maturation of the 28S rRNA. Functions as a component of the Five Friends of Methylated CHTOP (5FMC) complex; the 5FMC complex is recruited to ZNF148 by methylated CHTOP, leading to desumoylation of ZNF148 and subsequent transactivation of ZNF148 target genes. Required for the efficient pre-rRNA processing at both ends of internal transcribed spacer 2 (ITS2). The chain is Ribosomal biogenesis protein LAS1L (LAS1L) from Homo sapiens (Human).